Reading from the N-terminus, the 327-residue chain is Methionine import ATP-binding protein MetN (327 aa).

The ABC transporter domain maps to 3–239 (VELKNIEKIY…PKHAVTKELI (237 aa)). 36-43 (GYSGAGKS) contacts ATP.

This sequence belongs to the ABC transporter superfamily. Methionine importer (TC 3.A.1.24) family. As to quaternary structure, the complex is composed of two ATP-binding proteins (MetN), two transmembrane proteins (MetI) and a solute-binding protein (MetQ).

The protein localises to the cell inner membrane. It catalyses the reaction L-methionine(out) + ATP + H2O = L-methionine(in) + ADP + phosphate + H(+). The enzyme catalyses D-methionine(out) + ATP + H2O = D-methionine(in) + ADP + phosphate + H(+). Its function is as follows. Part of the ABC transporter complex MetNIQ involved in methionine import. Responsible for energy coupling to the transport system. This is Methionine import ATP-binding protein MetN from Helicobacter acinonychis (strain Sheeba).